Consider the following 236-residue polypeptide: Large ribosomal subunit protein uL3 (236 aa).

The interval 215–236 is disordered; sequence PAPEPAAPVAAAAAGTGEEASA. A compositionally biased stretch (low complexity) spans 221 to 236; it reads APVAAAAAGTGEEASA.

This sequence belongs to the universal ribosomal protein uL3 family. Part of the 50S ribosomal subunit. Forms a cluster with proteins L14 and L19.

Its function is as follows. One of the primary rRNA binding proteins, it binds directly near the 3'-end of the 23S rRNA, where it nucleates assembly of the 50S subunit. The polypeptide is Large ribosomal subunit protein uL3 (Parafrankia sp. (strain EAN1pec)).